The chain runs to 615 residues: Mitochondrial distribution and morphology protein 34 (615 aa).

The 195-residue stretch at 1–195 (MAFNFNWSPL…LPAIIHRLSL (195 aa)) folds into the SMP-LTD domain. Disordered regions lie at residues 293-313 (SDKP…RTSS), 346-566 (ATTG…PQPD), and 596-615 (PAFW…YEPR). Residues 301-313 (TPASTPNLHRTSS) are compositionally biased toward polar residues. Residues 346–355 (ATTGLSLGSG) are compositionally biased toward low complexity. A compositionally biased stretch (basic residues) spans 356-367 (RHSKAGRKKKMR). 3 stretches are compositionally biased toward polar residues: residues 384-403 (IGST…TRTP), 435-446 (DATTSARASESS), and 457-499 (VTAQ…YSSR). The span at 517–557 (QQQQFQQQQQQQQQQQQQQQQQQQQQQQQQQQQQQQQQQQQ) shows a compositional bias: low complexity. Basic and acidic residues predominate over residues 596–606 (PAFWEDSHQHD).

This sequence belongs to the MDM34 family. In terms of assembly, component of the ER-mitochondria encounter structure (ERMES) or MDM complex, composed of mmm-1, mdm10, mdm12 and mdm34.

It localises to the mitochondrion outer membrane. Component of the ERMES/MDM complex, which serves as a molecular tether to connect the endoplasmic reticulum (ER) and mitochondria. Components of this complex are involved in the control of mitochondrial shape and protein biogenesis, and function in nonvesicular lipid trafficking between the ER and mitochondria. Mdm34 is required for the interaction of the ER-resident membrane protein mmm-1 and the outer mitochondrial membrane-resident beta-barrel protein mdm10. The protein is Mitochondrial distribution and morphology protein 34 of Neurospora crassa (strain ATCC 24698 / 74-OR23-1A / CBS 708.71 / DSM 1257 / FGSC 987).